Consider the following 295-residue polypeptide: Ribose-phosphate pyrophosphokinase (295 aa).

Residues 46–48 (DGE) and 101–102 (RQ) each bind ATP. Residues H132 and D171 each contribute to the Mg(2+) site. K194 is a catalytic residue. Positions 196 and 220 each coordinate D-ribose 5-phosphate.

This sequence belongs to the ribose-phosphate pyrophosphokinase family. Class III (archaeal) subfamily. Mg(2+) is required as a cofactor.

Its subcellular location is the cytoplasm. The catalysed reaction is D-ribose 5-phosphate + ATP = 5-phospho-alpha-D-ribose 1-diphosphate + AMP + H(+). The protein operates within metabolic intermediate biosynthesis; 5-phospho-alpha-D-ribose 1-diphosphate biosynthesis; 5-phospho-alpha-D-ribose 1-diphosphate from D-ribose 5-phosphate (route I): step 1/1. Functionally, involved in the biosynthesis of the central metabolite phospho-alpha-D-ribosyl-1-pyrophosphate (PRPP) via the transfer of pyrophosphoryl group from ATP to 1-hydroxyl of ribose-5-phosphate (Rib-5-P). The chain is Ribose-phosphate pyrophosphokinase from Methanosarcina mazei (strain ATCC BAA-159 / DSM 3647 / Goe1 / Go1 / JCM 11833 / OCM 88) (Methanosarcina frisia).